Consider the following 484-residue polypeptide: MSFETPDFSLALPEIWLLAATCGVLVVDLFSSDPRRSATFYLTQGALLVTAVLALSTQWGVNEVTFSGHYMADSLGAVVKASVALLSVLALAYTRPYLGDRGLLQGEFYLLALFANLGMLVIASGGSLLSLYLGLELLSLALYALVAYHRDSRQAAEAAMKYFVLGSLASGILLYGMSMVYGATASLELSVIAEVAGRHSDPLMLLFGVVFMLVGVAFKLGAAPFHAWVPDVYQGAPTPVTLFLSTAPKVAAVALFMRLLVDGLGPMHEQLEPMLMILAVASLLVGNLIAIVQTNFKRMLAYSAIAHAGFIMVGFTAGTDAGHAAALFYTIAYSIMAAGAFGMITVLARSGFEAEEIADLRGLNERHPVYAGVLLLVLVSMTGIPGTVGFYAKYLVLQAAVEAGHIPLAIFAVVAAVVGAFYYLRVLKVVYFDRPEAEVDADTLPAPGASSAIRSLVVVNGVAVLVLGIFPERLIALCQAALGL.

Helical transmembrane passes span 10-30, 40-60, 74-94, 108-128, 129-149, 163-183, 203-223, 237-257, 272-292, 299-319, 327-347, 370-390, and 404-424; these read LALP…VDLF, FYLT…TQWG, SLGA…LAYT, FYLL…GGSL, LSLY…VAYH, FVLG…VYGA, LMLL…LGAA, PTPV…ALFM, EPML…IAIV, MLAY…TAGT, LFYT…ITVL, YAGV…TVGF, and GHIP…FYYL.

Belongs to the complex I subunit 2 family. NDH-1 is composed of 14 different subunits. Subunits NuoA, H, J, K, L, M, N constitute the membrane sector of the complex.

It is found in the cell inner membrane. It catalyses the reaction a quinone + NADH + 5 H(+)(in) = a quinol + NAD(+) + 4 H(+)(out). In terms of biological role, NDH-1 shuttles electrons from NADH, via FMN and iron-sulfur (Fe-S) centers, to quinones in the respiratory chain. The immediate electron acceptor for the enzyme in this species is believed to be ubiquinone. Couples the redox reaction to proton translocation (for every two electrons transferred, four hydrogen ions are translocated across the cytoplasmic membrane), and thus conserves the redox energy in a proton gradient. The polypeptide is NADH-quinone oxidoreductase subunit N (Halorhodospira halophila (strain DSM 244 / SL1) (Ectothiorhodospira halophila (strain DSM 244 / SL1))).